A 176-amino-acid polypeptide reads, in one-letter code: SsrA-binding protein (176 aa).

The segment at 1-33 (MTEAGAKKAAGKKSGKGKGKNAKKNQPNITPVA) is disordered. Over residues 9-23 (AAGKKSGKGKGKNAK) the composition is skewed to basic residues.

This sequence belongs to the SmpB family.

Its subcellular location is the cytoplasm. Required for rescue of stalled ribosomes mediated by trans-translation. Binds to transfer-messenger RNA (tmRNA), required for stable association of tmRNA with ribosomes. tmRNA and SmpB together mimic tRNA shape, replacing the anticodon stem-loop with SmpB. tmRNA is encoded by the ssrA gene; the 2 termini fold to resemble tRNA(Ala) and it encodes a 'tag peptide', a short internal open reading frame. During trans-translation Ala-aminoacylated tmRNA acts like a tRNA, entering the A-site of stalled ribosomes, displacing the stalled mRNA. The ribosome then switches to translate the ORF on the tmRNA; the nascent peptide is terminated with the 'tag peptide' encoded by the tmRNA and targeted for degradation. The ribosome is freed to recommence translation, which seems to be the essential function of trans-translation. This is SsrA-binding protein from Rhodopirellula baltica (strain DSM 10527 / NCIMB 13988 / SH1).